The following is a 381-amino-acid chain: Cytochrome b (381 aa).

A run of 4 helical transmembrane segments spans residues 36 to 56, 80 to 101, 116 to 136, and 181 to 201; these read FGSL…FLTM, WLIR…YIHI, WMVG…GYVL, and FYTF…IHLL. Positions 86 and 100 each coordinate heme b. The heme b site is built by H185 and H199. Position 204 (H204) interacts with a ubiquinone. Helical transmembrane passes span 229 to 249, 291 to 311, 323 to 343, and 350 to 370; these read FKDM…TLTN, LGGV…PLTF, MNQI…WIGA, and YVFV…INPM.

The protein belongs to the cytochrome b family. As to quaternary structure, the main subunits of complex b-c1 are: cytochrome b, cytochrome c1 and the Rieske protein. The cofactor is heme b.

It is found in the mitochondrion inner membrane. Its function is as follows. Component of the ubiquinol-cytochrome c reductase complex (complex III or cytochrome b-c1 complex) that is part of the mitochondrial respiratory chain. The b-c1 complex mediates electron transfer from ubiquinol to cytochrome c. Contributes to the generation of a proton gradient across the mitochondrial membrane that is then used for ATP synthesis. This is Cytochrome b (MT-CYB) from Ostrinia nubilalis (European corn borer).